The chain runs to 318 residues: Acetyl-coenzyme A carboxylase carboxyl transferase subunit alpha (318 aa).

A CoA carboxyltransferase C-terminal domain is found at 39–292 (LSDKAERQLR…GAAIAETLPG (254 aa)).

The protein belongs to the AccA family. In terms of assembly, acetyl-CoA carboxylase is a heterohexamer composed of biotin carboxyl carrier protein (AccB), biotin carboxylase (AccC) and two subunits each of ACCase subunit alpha (AccA) and ACCase subunit beta (AccD).

It is found in the cytoplasm. The catalysed reaction is N(6)-carboxybiotinyl-L-lysyl-[protein] + acetyl-CoA = N(6)-biotinyl-L-lysyl-[protein] + malonyl-CoA. It participates in lipid metabolism; malonyl-CoA biosynthesis; malonyl-CoA from acetyl-CoA: step 1/1. Its function is as follows. Component of the acetyl coenzyme A carboxylase (ACC) complex. First, biotin carboxylase catalyzes the carboxylation of biotin on its carrier protein (BCCP) and then the CO(2) group is transferred by the carboxyltransferase to acetyl-CoA to form malonyl-CoA. This Acidiphilium cryptum (strain JF-5) protein is Acetyl-coenzyme A carboxylase carboxyl transferase subunit alpha.